We begin with the raw amino-acid sequence, 322 residues long: Mitochondrial thiamine pyrophosphate carrier 1 (322 aa).

3 Solcar repeats span residues 12-111, 122-208, and 215-310; these read GSKT…VTLA, PAAA…LRVP, and PFGS…VLRL. Helical transmembrane passes span 18 to 38, 92 to 108, 128 to 148, 180 to 200, 221 to 241, and 285 to 302; these read MIAG…LDVV, LMYV…YRSV, FIAG…LDLL, FFQG…IFFA, ATAG…FDLI, and GLTV…VTMW.

This sequence belongs to the mitochondrial carrier (TC 2.A.29) family.

Its subcellular location is the mitochondrion inner membrane. Mitochondrial transporter that mediates uptake of thiamine pyrophosphate (ThPP) into mitochondria. The chain is Mitochondrial thiamine pyrophosphate carrier 1 (tpc1) from Sclerotinia sclerotiorum (strain ATCC 18683 / 1980 / Ss-1) (White mold).